Here is a 531-residue protein sequence, read N- to C-terminus: Probable calcium-binding mitochondrial carrier F17E5.2 (531 aa).

4 consecutive EF-hand domains span residues Glu-70 to Ile-105, Pro-106 to Ile-135, Ala-136 to Asn-171, and Leu-172 to Thr-207. Positions 83, 85, 87, 89, and 94 each coordinate Ca(2+). 5 residues coordinate Ca(2+): Asp-149, Asn-151, Asp-153, Glu-155, and Glu-160. Solcar repeat units follow at residues Gly-242–Trp-328, Leu-338–Met-424, and Pro-435–Gln-525. 6 helical membrane passes run Leu-248 to Phe-265, Gly-303 to Tyr-322, Ser-348 to Met-361, Gly-399 to Tyr-418, Leu-441 to Leu-458, and Gly-500 to Val-517.

It belongs to the mitochondrial carrier (TC 2.A.29) family.

It is found in the mitochondrion inner membrane. In terms of biological role, calcium-dependent mitochondrial solute carrier. This is Probable calcium-binding mitochondrial carrier F17E5.2 from Caenorhabditis elegans.